Consider the following 274-residue polypeptide: Small ribosomal subunit protein uS3 (274 aa).

One can recognise a KH type-2 domain in the interval Ile-38–Lys-106. A disordered region spans residues Ala-215–Ser-274. Low complexity predominate over residues Ser-238–Pro-266.

This sequence belongs to the universal ribosomal protein uS3 family. As to quaternary structure, part of the 30S ribosomal subunit. Forms a tight complex with proteins S10 and S14.

In terms of biological role, binds the lower part of the 30S subunit head. Binds mRNA in the 70S ribosome, positioning it for translation. This Mycobacterium tuberculosis (strain ATCC 25177 / H37Ra) protein is Small ribosomal subunit protein uS3.